The sequence spans 170 residues: Non-specific lipid transfer protein GPI-anchored 5 (170 aa).

Residues 1 to 24 (MKMEMGLVFLTVFMAVMSSTMVSA) form the signal peptide. 4 disulfides stabilise this stretch: Cys28–Cys69, Cys38–Cys53, Cys54–Cys95, and Cys67–Cys105. 4 N-linked (GlcNAc...) asparagine glycosylation sites follow: Asn45, Asn84, Asn124, and Asn130. Positions 105-148 (CNTGGGGGGSTSDSPAESPNSSGPGNGSKTVPVGEGDGPPSSDG) are disordered. Ser146 carries the GPI-anchor amidated serine lipid modification. Residues 147–170 (DGSSIKFSFPLIAFFSAVSYMAIF) constitute a propeptide, removed in mature form.

This sequence belongs to the plant LTP family. Expressed in seedlings, preferentially in the endodermis of hypocotyls and roots, as well as in anthers, sepals and flower tori.

Its subcellular location is the cell membrane. Its function is as follows. Lipid transfer protein involved in seed and ovule maturation and development, probably by regulating the fatty acids homeostasis during suberin and sporopollenin biosynthesis or deposition. Contributes to pre-invasive defense against some non-host powdery mildew pathogens by preventing the penetration of the epidermal cell wall by the fungal agents (e.g. Blumeria graminis f. sp. hordei (Bgh)). This chain is Non-specific lipid transfer protein GPI-anchored 5, found in Arabidopsis thaliana (Mouse-ear cress).